The chain runs to 880 residues: Xylosyltransferase oxt (880 aa).

At 1 to 14 (MEQSVSARWLRRYR) the chain is on the cytoplasmic side. A helical; Signal-anchor for type II membrane protein membrane pass occupies residues 15-35 (PVLIILVLIFGIQLFLAYKSV). The Lumenal segment spans residues 36 to 880 (DIGGGSGSGL…PKSDVDALLK (845 aa)). 4 disulfide bridges follow: Cys-87-Cys-115, Cys-131-Cys-469, Cys-488-Cys-501, and Cys-490-Cys-499. N-linked (GlcNAc...) asparagine glycans are attached at residues Asn-135 and Asn-139. Residues 138-232 (ANVSLGCYRD…FYAMNIYETG (95 aa)) enclose the WSC domain. Residues Asp-287 and 316 to 318 (TIW) each bind UDP-alpha-D-xylose. N-linked (GlcNAc...) asparagine glycosylation occurs at Asn-346. 419–420 (DW) lines the UDP-alpha-D-xylose pocket. Residues Ser-502 and 526–527 (RK) contribute to the UDP-alpha-D-xylose site. Residues Asn-700 and Asn-729 are each glycosylated (N-linked (GlcNAc...) asparagine). A disulfide bridge links Cys-846 with Cys-859.

The protein belongs to the glycosyltransferase 14 family. XylT subfamily. It depends on Ca(2+) as a cofactor. Mn(2+) serves as cofactor. The cofactor is Mg(2+).

The protein localises to the endoplasmic reticulum membrane. Its subcellular location is the golgi apparatus membrane. It catalyses the reaction UDP-alpha-D-xylose + L-seryl-[protein] = 3-O-(beta-D-xylosyl)-L-seryl-[protein] + UDP + H(+). It participates in glycan metabolism; chondroitin sulfate biosynthesis. Its pathway is glycan metabolism; heparan sulfate biosynthesis. Functionally, catalyzes the first step in biosynthesis of glycosaminoglycan. Transfers D-xylose from UDP-D-xylose to specific serine residues of the core protein. The polypeptide is Xylosyltransferase oxt (Drosophila pseudoobscura pseudoobscura (Fruit fly)).